Here is a 212-residue protein sequence, read N- to C-terminus: MAEMSNNKTSEEAKANGKKSQSETLEESKLENMNSEESTETTQTESMETAETETSLQTELESAKKEIESLKDSWARERAEFQNFKRRSAQEFVSIRKEAVKSLVSGFLNPIDNLERVGATQTNSEELKPFVDGVTMILKEFYSVLEKSNVIRFDPKGEPFDPMSMEALSSEEGDQYSEETVIDVYQPGYYYKENEDKFTLRPARVRIGKPKS.

Positions 1-69 (MAEMSNNKTS…LESAKKEIES (69 aa)) are disordered. A compositionally biased stretch (low complexity) spans 40–60 (ETTQTESMETAETETSLQTEL).

Belongs to the GrpE family. In terms of assembly, homodimer.

It is found in the cytoplasm. Functionally, participates actively in the response to hyperosmotic and heat shock by preventing the aggregation of stress-denatured proteins, in association with DnaK and GrpE. It is the nucleotide exchange factor for DnaK and may function as a thermosensor. Unfolded proteins bind initially to DnaJ; upon interaction with the DnaJ-bound protein, DnaK hydrolyzes its bound ATP, resulting in the formation of a stable complex. GrpE releases ADP from DnaK; ATP binding to DnaK triggers the release of the substrate protein, thus completing the reaction cycle. Several rounds of ATP-dependent interactions between DnaJ, DnaK and GrpE are required for fully efficient folding. The polypeptide is Protein GrpE (Leptospira interrogans serogroup Icterohaemorrhagiae serovar Lai (strain 56601)).